The chain runs to 527 residues: Glutamate--cysteine ligase (527 aa).

Belongs to the glutamate--cysteine ligase type 1 family. Type 1 subfamily.

The catalysed reaction is L-cysteine + L-glutamate + ATP = gamma-L-glutamyl-L-cysteine + ADP + phosphate + H(+). It participates in sulfur metabolism; glutathione biosynthesis; glutathione from L-cysteine and L-glutamate: step 1/2. The polypeptide is Glutamate--cysteine ligase (Pseudomonas aeruginosa (strain UCBPP-PA14)).